The chain runs to 226 residues: Orotate phosphoribosyltransferase (226 aa).

Residues K26, 73–74 (YK), R100, K101, K104, H106, and 128–136 (EDVTTSGKS) contribute to the 5-phospho-alpha-D-ribose 1-diphosphate site. Residues T132 and R161 each contribute to the orotate site.

The protein belongs to the purine/pyrimidine phosphoribosyltransferase family. PyrE subfamily. In terms of assembly, homodimer. Mg(2+) is required as a cofactor.

It carries out the reaction orotidine 5'-phosphate + diphosphate = orotate + 5-phospho-alpha-D-ribose 1-diphosphate. The protein operates within pyrimidine metabolism; UMP biosynthesis via de novo pathway; UMP from orotate: step 1/2. Its function is as follows. Catalyzes the transfer of a ribosyl phosphate group from 5-phosphoribose 1-diphosphate to orotate, leading to the formation of orotidine monophosphate (OMP). This Agathobacter rectalis (strain ATCC 33656 / DSM 3377 / JCM 17463 / KCTC 5835 / VPI 0990) (Eubacterium rectale) protein is Orotate phosphoribosyltransferase.